The primary structure comprises 488 residues: Splicing factor U2AF 65 kDa subunit (488 aa).

Composition is skewed to basic and acidic residues over residues 25–55 (LESLQEDVKPDVKSDLNGNGEEKRDRDDEDR) and 78–129 (DRRD…KYRF). The tract at residues 25–133 (LESLQEDVKP…PKKYRFWDVP (109 aa)) is disordered. RRM domains follow at residues 175 to 257 (RRLY…RPRD), 282 to 359 (NKIF…LACA), and 389 to 479 (EILC…YYDV).

The protein belongs to the splicing factor SR family. As to quaternary structure, forms a heterodimer with the U2AF small subunit.

Its subcellular location is the nucleus. In terms of biological role, necessary for the splicing of pre-mRNA. Binds to the polypyrimidine tract of introns early during spliceosome assembly. This is Splicing factor U2AF 65 kDa subunit (uaf-1) from Caenorhabditis briggsae.